The primary structure comprises 220 residues: Ribosomal RNA large subunit methyltransferase E (220 aa).

S-adenosyl-L-methionine is bound by residues Gly-60, Trp-62, Asp-92, Asp-108, and Asp-133. Catalysis depends on Lys-173, which acts as the Proton acceptor.

Belongs to the class I-like SAM-binding methyltransferase superfamily. RNA methyltransferase RlmE family.

It is found in the cytoplasm. The catalysed reaction is uridine(2552) in 23S rRNA + S-adenosyl-L-methionine = 2'-O-methyluridine(2552) in 23S rRNA + S-adenosyl-L-homocysteine + H(+). Functionally, specifically methylates the uridine in position 2552 of 23S rRNA at the 2'-O position of the ribose in the fully assembled 50S ribosomal subunit. This chain is Ribosomal RNA large subunit methyltransferase E, found in Burkholderia multivorans (strain ATCC 17616 / 249).